Reading from the N-terminus, the 300-residue chain is 33 kDa chaperonin (300 aa).

Intrachain disulfides connect Cys-235–Cys-237 and Cys-269–Cys-272.

Belongs to the HSP33 family. Under oxidizing conditions two disulfide bonds are formed involving the reactive cysteines. Under reducing conditions zinc is bound to the reactive cysteines and the protein is inactive.

Its subcellular location is the cytoplasm. In terms of biological role, redox regulated molecular chaperone. Protects both thermally unfolding and oxidatively damaged proteins from irreversible aggregation. Plays an important role in the bacterial defense system toward oxidative stress. This chain is 33 kDa chaperonin, found in Pseudomonas syringae pv. tomato (strain ATCC BAA-871 / DC3000).